A 229-amino-acid chain; its full sequence is Peptidase E (229 aa).

Active-site charge relay system residues include Ser120, Asp135, and His157.

This sequence belongs to the peptidase S51 family.

It localises to the cytoplasm. The catalysed reaction is Dipeptidase E catalyzes the hydrolysis of dipeptides Asp-|-Xaa. It does not act on peptides with N-terminal Glu, Asn or Gln, nor does it cleave isoaspartyl peptides.. Hydrolyzes dipeptides containing N-terminal aspartate residues. May play a role in allowing the cell to use peptide aspartate to spare carbon otherwise required for the synthesis of the aspartate family of amino acids. This Citrobacter koseri (strain ATCC BAA-895 / CDC 4225-83 / SGSC4696) protein is Peptidase E.